Reading from the N-terminus, the 67-residue chain is Stomoxyn (67 aa).

The N-terminal stretch at 1 to 24 (MNFYKYLVVLVVLVLCLSATQTEA) is a signal peptide. At threonine 66 the chain carries Threonine amide.

As to expression, constitutively expressed in the adult anterior midgut; proventriculus, thoracic and reservoir regions.

It is found in the secreted. Has antimicrobial activity against most Gram-positive and Gram-negative bacteria, filamentous fungi and yeasts tested. Has trypanolytic effect on T.b.rhodesiense and limited hemolytic activity against bovine red blood cells. In terms of biological role, may play an important role in protecting the stored blood in the anterior midgut from microorganisms prior to digestion. Adopts an amphipathic alpha-helical structure only in the presence of an organic solvent that mimics a phospholipid membrane. This is Stomoxyn from Stomoxys calcitrans (Stable fly).